A 248-amino-acid chain; its full sequence is ATP synthase subunit a, chloroplastic (248 aa).

5 helical membrane passes run 38-58 (QVLITSWVVIAILLGSAAIAV), 96-116 (VPFIGTLFLFIFVSNWSGALL), 135-155 (INTTVALALLTSVAYFYAGLT), 200-220 (LVVVVLVSLVPLVIPIPVMFL), and 221-241 (GLFTSGIQALIFATLAAAYIG).

Belongs to the ATPase A chain family. F-type ATPases have 2 components, CF(1) - the catalytic core - and CF(0) - the membrane proton channel. CF(1) has five subunits: alpha(3), beta(3), gamma(1), delta(1), epsilon(1). CF(0) has four main subunits: a, b, b' and c.

The protein localises to the plastid. The protein resides in the chloroplast thylakoid membrane. In terms of biological role, key component of the proton channel; it plays a direct role in the translocation of protons across the membrane. The chain is ATP synthase subunit a, chloroplastic from Nuphar advena (Common spatterdock).